The chain runs to 743 residues: MMNMKIVLFSLLLFVIRWNIISCNKNDKNQGVDMNVLNNYENLFKFVKCEYCNEHTYVKGKKAPSDPQCADIKEECKELLKEKQYTDSVTYLMDGFKSANNSANNGKKNNAEEMKNLVNFLQSHKKLIKALKKNIESIQNKKHLIYKNKSYNPLLLSCVKKMNMLKENVDYIQKNQNLFKELMNQKATYSFVNTKKKIISLKSQGHKKETSQNQNENNDNQKYQEVNDEDDVNDEEDTNDDEDTNDEEDTNDDEDTNDDEDTNDEEDTNDEEDHENNNATAYELGIVPVNDVLNVNMKNMITGNNFMDVVKNTLAQSGGLGSNDLINFLNQGKEIGENLLNITKMNLGDKNNLESFPLDELNMLKDNLINYEFILDNLKTSVLNKLKDLLLRLLYKAYVSYKKRKAQEKGLPEPTVTNEEYVEELKKGILDMGIKLLFSKVKSLLKKLKNKIFPKKKEDNQAVDTKSMEEPKVKAQPALRGVEPTEDSNIMNSINNVMDEIDFFEKELIENNNTPNVVPPTQSKKKNKNETVSGMDENFDNHPENYFKEEYYYDENDDMEVKVKKIGVTLKKFEPLKNGNVSETIKLIHLGNKDKKHIEAINNDIQIIKQELQAIYNELMNYTNGNKNIQQIFQQNILENDVLNQETEEEMEKQVEAITKQIEAEVDALAPKNKEEEEKEKEKEKEKEEKEKEEKEKEEKEKEKEEKEKEKEEKEEEKKEKEEEQEEEEEEIVPENLTTEESK.

Positions 1–23 (MMNMKIVLFSLLLFVIRWNIISC) are cleaved as a signal peptide. An interaction with MSP1 and host SLC4A1/Band 3 region spans residues 77–235 (KELLKEKQYT…VNDEDDVNDE (159 aa)). Disordered stretches follow at residues 202–282 (KSQG…ATAY), 459–487 (DNQAVDTKSMEEPKVKAQPALRGVEPTED), 512–540 (NNTPNVVPPTQSKKKNKNETVSGMDENFD), and 666–743 (VDAL…EESK). A compositionally biased stretch (polar residues) spans 211–224 (SQNQNENNDNQKYQ). 8 repeat units span residues 226 to 231 (VNDEDD), 232 to 237 (VNDEED), 238 to 243 (TNDDED), 244 to 249 (TNDEED), 250 to 255 (TNDDED), 256 to 261 (TNDDED), 262 to 267 (TNDEED), and 268 to 273 (TNDEED). Positions 226 to 273 (VNDEDDVNDEEDTNDDEDTNDEEDTNDDEDTNDDEDTNDEEDTNDEED) are 8 X 6 AA tandem repeats of [VT]-N-D-[ED]-[ED]-D. Positions 226-274 (VNDEDDVNDEEDTNDDEDTNDEEDTNDDEDTNDDEDTNDEEDTNDEEDH) are enriched in acidic residues. The segment at 364-528 (LKDNLINYEF…PPTQSKKKNK (165 aa)) is interaction with MSP1 and host SLC4A1/Band 3. Over residues 459–473 (DNQAVDTKSMEEPKV) the composition is skewed to basic and acidic residues. Low complexity predominate over residues 512 to 521 (NNTPNVVPPT). A coiled-coil region spans residues 644–732 (NQETEEEMEK…EEQEEEEEEI (89 aa)). Over residues 672–722 (KNKEEEEKEKEKEKEKEEKEKEEKEKEEKEKEKEEKEKEKEEKEEEKKEKE) the composition is skewed to basic and acidic residues. The span at 723–733 (EEQEEEEEEIV) shows a compositional bias: acidic residues.

The protein belongs to the plasmodium ABRA family. In terms of assembly, forms a complex composed of MSP1, MSP6, MSP7, MSP9 and MSP3; within the complex, MSP6 and MSP9 mediate the binding to the host erythrocyte. Interacts with MSP1 subunits p19 and p42; the interaction is direct. Interacts with host SLC4A1/Band 3 protein (via the 5ABC region). MSP1 subunits p19 or p42, and MSP9 form a co-ligand complex that interacts with host SLC4A1/Band 3 protein. Not glycosylated.

The protein localises to the cell membrane. It localises to the parasitophorous vacuole lumen. It is found in the secreted. Its function is as follows. During the asexual blood stage, involved in the sialic acid-independent (SAID) merozoite invasion of host erythrocytes by binding to host SLC4A1/Band 3 protein on the surface of the host erythrocyte. The chain is Merozoite surface protein 9 from Plasmodium falciparum (isolate Camp / Malaysia).